We begin with the raw amino-acid sequence, 376 residues long: Probable tRNA sulfurtransferase (376 aa).

One can recognise a THUMP domain in the interval 51 to 152 (EENLKNLKYV…KNSVYVFDKS (102 aa)). ATP-binding positions include 170–171 (LI), 195–196 (TF), arginine 252, glycine 274, and glutamine 283.

The protein belongs to the ThiI family.

It localises to the cytoplasm. The enzyme catalyses [ThiI sulfur-carrier protein]-S-sulfanyl-L-cysteine + a uridine in tRNA + 2 reduced [2Fe-2S]-[ferredoxin] + ATP + H(+) = [ThiI sulfur-carrier protein]-L-cysteine + a 4-thiouridine in tRNA + 2 oxidized [2Fe-2S]-[ferredoxin] + AMP + diphosphate. It carries out the reaction [ThiS sulfur-carrier protein]-C-terminal Gly-Gly-AMP + S-sulfanyl-L-cysteinyl-[cysteine desulfurase] + AH2 = [ThiS sulfur-carrier protein]-C-terminal-Gly-aminoethanethioate + L-cysteinyl-[cysteine desulfurase] + A + AMP + 2 H(+). Its pathway is cofactor biosynthesis; thiamine diphosphate biosynthesis. Catalyzes the ATP-dependent transfer of a sulfur to tRNA to produce 4-thiouridine in position 8 of tRNAs, which functions as a near-UV photosensor. Also catalyzes the transfer of sulfur to the sulfur carrier protein ThiS, forming ThiS-thiocarboxylate. This is a step in the synthesis of thiazole, in the thiamine biosynthesis pathway. The sulfur is donated as persulfide by IscS. This chain is Probable tRNA sulfurtransferase, found in Mycoplasmopsis synoviae (strain 53) (Mycoplasma synoviae).